A 251-amino-acid chain; its full sequence is PF03932 family protein CutC (251 aa).

The protein belongs to the CutC family.

The protein localises to the cytoplasm. This chain is PF03932 family protein CutC, found in Bacteroides fragilis (strain YCH46).